We begin with the raw amino-acid sequence, 279 residues long: Phosphatidylglycerol--prolipoprotein diacylglyceryl transferase (279 aa).

The next 7 membrane-spanning stretches (helical) occupy residues Ile14–Ile34, Tyr62–Tyr82, Phe106–Tyr126, Leu136–Ile156, Pro190–Ala210, Gly218–Tyr238, and Leu252–Tyr272. Residue Arg155 coordinates a 1,2-diacyl-sn-glycero-3-phospho-(1'-sn-glycerol).

Belongs to the Lgt family.

Its subcellular location is the cell inner membrane. The catalysed reaction is L-cysteinyl-[prolipoprotein] + a 1,2-diacyl-sn-glycero-3-phospho-(1'-sn-glycerol) = an S-1,2-diacyl-sn-glyceryl-L-cysteinyl-[prolipoprotein] + sn-glycerol 1-phosphate + H(+). The protein operates within protein modification; lipoprotein biosynthesis (diacylglyceryl transfer). In terms of biological role, catalyzes the transfer of the diacylglyceryl group from phosphatidylglycerol to the sulfhydryl group of the N-terminal cysteine of a prolipoprotein, the first step in the formation of mature lipoproteins. This chain is Phosphatidylglycerol--prolipoprotein diacylglyceryl transferase, found in Helicobacter pylori (strain HPAG1).